The primary structure comprises 106 residues: Large ribosomal subunit protein uL24 (106 aa).

Belongs to the universal ribosomal protein uL24 family. Part of the 50S ribosomal subunit.

Functionally, one of two assembly initiator proteins, it binds directly to the 5'-end of the 23S rRNA, where it nucleates assembly of the 50S subunit. One of the proteins that surrounds the polypeptide exit tunnel on the outside of the subunit. This is Large ribosomal subunit protein uL24 from Laribacter hongkongensis (strain HLHK9).